Reading from the N-terminus, the 268-residue chain is Homeobox protein Hox-C4a (268 aa).

The segment at 70–129 (PEPDTQRGHGLPHAGHLLGKGQSASCEPPPLPLSPATPSAASSACNQATPEHPNSSASAK) is disordered. Low complexity-rich tracts occupy residues 77-95 (GHGL…SASC) and 105-114 (ATPSAASSAC). A compositionally biased stretch (polar residues) spans 115–128 (NQATPEHPNSSASA). The Antp-type hexapeptide signature appears at 133 to 138 (VYPWMK). Residues 154–213 (PKRSRTAYTRQQVLELEKEFHYNRYLTRRRRIEIAHSLVLSERQIKIWFQNRRMKWKKDH) constitute a DNA-binding region (homeobox). The segment at 212 to 268 (DHRLPNTKVRSSSSTGISSGSNTSSAAGVVAAASTTNTMSASEDLSGTERGEDITRL) is disordered. Low complexity predominate over residues 222 to 253 (SSSSTGISSGSNTSSAAGVVAAASTTNTMSAS). A compositionally biased stretch (basic and acidic residues) spans 258–268 (GTERGEDITRL).

Belongs to the Antp homeobox family. Deformed subfamily.

The protein resides in the nucleus. In terms of biological role, sequence-specific transcription factor which is part of a developmental regulatory system that provides cells with specific positional identities on the anterior-posterior axis. The chain is Homeobox protein Hox-C4a (hoxc4a) from Danio rerio (Zebrafish).